The following is a 319-amino-acid chain: Pantothenate kinase (319 aa).

96–103 contributes to the ATP binding site; sequence GSVAVGKS.

Belongs to the prokaryotic pantothenate kinase family.

Its subcellular location is the cytoplasm. The enzyme catalyses (R)-pantothenate + ATP = (R)-4'-phosphopantothenate + ADP + H(+). Its pathway is cofactor biosynthesis; coenzyme A biosynthesis; CoA from (R)-pantothenate: step 1/5. In Bacillus velezensis (strain DSM 23117 / BGSC 10A6 / LMG 26770 / FZB42) (Bacillus amyloliquefaciens subsp. plantarum), this protein is Pantothenate kinase.